A 144-amino-acid chain; its full sequence is MGSKIFLLLGLSIAFAILISSEVAARELAETAAKTEGYNNGGGYHNGGGGYNNGGGYHNGGGGYNNGGGYHNGGGGYNNGGGYHNGGGGYNNGGGHHNGGGGYNNGGGHHGGGGSCYHYCHGRCCSAAEAKALEATTAQVKPQN.

A helical transmembrane segment spans residues 5 to 25; that stretch reads IFLLLGLSIAFAILISSEVAA. 11 repeat units span residues 37–42, 43–48, 50–55, 56–61, 63–68, 69–74, 76–81, 82–87, 89–94, 102–107, and 108–113. The segment at 37 to 113 is 11 X 6 AA tandem repeats of G-Y-[NH]-N-G -G; that stretch reads GYNNGGGYHN…NNGGGHHGGG (77 aa).

The protein belongs to the GRP family.

The protein resides in the membrane. The polypeptide is Glycine-rich protein DC9.1 (Daucus carota (Wild carrot)).